Consider the following 62-residue polypeptide: Photosystem II reaction center protein Z (62 aa).

2 consecutive transmembrane segments (helical) span residues 8 to 28 (LVSI…VILV) and 41 to 61 (YASA…NSFV).

This sequence belongs to the PsbZ family. PSII is composed of 1 copy each of membrane proteins PsbA, PsbB, PsbC, PsbD, PsbE, PsbF, PsbH, PsbI, PsbJ, PsbK, PsbL, PsbM, PsbT, PsbX, PsbY, PsbZ, Psb30/Ycf12, at least 3 peripheral proteins of the oxygen-evolving complex and a large number of cofactors. It forms dimeric complexes.

It localises to the plastid. It is found in the chloroplast thylakoid membrane. In terms of biological role, may control the interaction of photosystem II (PSII) cores with the light-harvesting antenna, regulates electron flow through the 2 photosystem reaction centers. PSII is a light-driven water plastoquinone oxidoreductase, using light energy to abstract electrons from H(2)O, generating a proton gradient subsequently used for ATP formation. This chain is Photosystem II reaction center protein Z, found in Guillardia theta (Cryptophyte).